Here is a 203-residue protein sequence, read N- to C-terminus: Probable GTP-binding protein EngB (203 aa).

The region spanning 24 to 199 (DGSEVAFAGR…HTVIETWLGL (176 aa)) is the EngB-type G domain. GTP contacts are provided by residues 32–39 (GRSNAGKS), 59–63 (GRTQQ), 77–80 (DLPG), 144–147 (TKAD), and 178–180 (FSS). Mg(2+)-binding residues include serine 39 and threonine 61.

This sequence belongs to the TRAFAC class TrmE-Era-EngA-EngB-Septin-like GTPase superfamily. EngB GTPase family. The cofactor is Mg(2+).

Functionally, necessary for normal cell division and for the maintenance of normal septation. In Xylella fastidiosa (strain 9a5c), this protein is Probable GTP-binding protein EngB.